A 124-amino-acid polypeptide reads, in one-letter code: Large ribosomal subunit protein bL17 (124 aa).

The protein belongs to the bacterial ribosomal protein bL17 family. As to quaternary structure, part of the 50S ribosomal subunit. Contacts protein L32.

The chain is Large ribosomal subunit protein bL17 from Persephonella marina (strain DSM 14350 / EX-H1).